A 146-amino-acid chain; its full sequence is Holo-[acyl-carrier-protein] synthase (146 aa).

Mg(2+)-binding residues include D9 and E63.

The protein belongs to the P-Pant transferase superfamily. AcpS family. Mg(2+) serves as cofactor.

It localises to the cytoplasm. The enzyme catalyses apo-[ACP] + CoA = holo-[ACP] + adenosine 3',5'-bisphosphate + H(+). Transfers the 4'-phosphopantetheine moiety from coenzyme A to a Ser of acyl-carrier-protein. The sequence is that of Holo-[acyl-carrier-protein] synthase from Burkholderia ambifaria (strain ATCC BAA-244 / DSM 16087 / CCUG 44356 / LMG 19182 / AMMD) (Burkholderia cepacia (strain AMMD)).